The chain runs to 211 residues: Thiamine-phosphate synthase (211 aa).

4-amino-2-methyl-5-(diphosphooxymethyl)pyrimidine contacts are provided by residues 40-42 (QLR) and N72. Residues D73 and D92 each coordinate Mg(2+). Position 111 (S111) interacts with 4-amino-2-methyl-5-(diphosphooxymethyl)pyrimidine. 136–138 (TST) contributes to the 2-[(2R,5Z)-2-carboxy-4-methylthiazol-5(2H)-ylidene]ethyl phosphate binding site. K139 serves as a coordination point for 4-amino-2-methyl-5-(diphosphooxymethyl)pyrimidine. Residues G167 and 187–188 (VS) each bind 2-[(2R,5Z)-2-carboxy-4-methylthiazol-5(2H)-ylidene]ethyl phosphate.

The protein belongs to the thiamine-phosphate synthase family. Mg(2+) is required as a cofactor.

It carries out the reaction 2-[(2R,5Z)-2-carboxy-4-methylthiazol-5(2H)-ylidene]ethyl phosphate + 4-amino-2-methyl-5-(diphosphooxymethyl)pyrimidine + 2 H(+) = thiamine phosphate + CO2 + diphosphate. The catalysed reaction is 2-(2-carboxy-4-methylthiazol-5-yl)ethyl phosphate + 4-amino-2-methyl-5-(diphosphooxymethyl)pyrimidine + 2 H(+) = thiamine phosphate + CO2 + diphosphate. It catalyses the reaction 4-methyl-5-(2-phosphooxyethyl)-thiazole + 4-amino-2-methyl-5-(diphosphooxymethyl)pyrimidine + H(+) = thiamine phosphate + diphosphate. It participates in cofactor biosynthesis; thiamine diphosphate biosynthesis; thiamine phosphate from 4-amino-2-methyl-5-diphosphomethylpyrimidine and 4-methyl-5-(2-phosphoethyl)-thiazole: step 1/1. In terms of biological role, condenses 4-methyl-5-(beta-hydroxyethyl)thiazole monophosphate (THZ-P) and 2-methyl-4-amino-5-hydroxymethyl pyrimidine pyrophosphate (HMP-PP) to form thiamine monophosphate (TMP). This chain is Thiamine-phosphate synthase, found in Laribacter hongkongensis (strain HLHK9).